The following is an 858-amino-acid chain: Bifunctional uridylyltransferase/uridylyl-removing enzyme (858 aa).

Residues 1–324 (MSAHAAPSPE…PATSGITRVL (324 aa)) form a uridylyltransferase region. The interval 325–681 (SADRFVEKQG…ARPSPIGDAL (357 aa)) is uridylyl-removing. Positions 443 to 565 (VDQHILMVLR…VGNERYLTAL (123 aa)) constitute an HD domain. ACT domains lie at 682-763 (QVLV…PSKG) and 790-858 (ILSV…AIAV).

This sequence belongs to the GlnD family. Requires Mg(2+) as cofactor.

The enzyme catalyses [protein-PII]-L-tyrosine + UTP = [protein-PII]-uridylyl-L-tyrosine + diphosphate. The catalysed reaction is [protein-PII]-uridylyl-L-tyrosine + H2O = [protein-PII]-L-tyrosine + UMP + H(+). Its activity is regulated as follows. Uridylyltransferase (UTase) activity is inhibited by glutamine, while glutamine activates uridylyl-removing (UR) activity. Functionally, modifies, by uridylylation and deuridylylation, the PII regulatory proteins (GlnB and homologs), in response to the nitrogen status of the cell that GlnD senses through the glutamine level. Under low glutamine levels, catalyzes the conversion of the PII proteins and UTP to PII-UMP and PPi, while under higher glutamine levels, GlnD hydrolyzes PII-UMP to PII and UMP (deuridylylation). Thus, controls uridylylation state and activity of the PII proteins, and plays an important role in the regulation of nitrogen assimilation and metabolism. The polypeptide is Bifunctional uridylyltransferase/uridylyl-removing enzyme (Burkholderia orbicola (strain MC0-3)).